Reading from the N-terminus, the 73-residue chain is Putative antitoxin VapB16 (73 aa).

Belongs to the UPF0330 family.

Possibly the antitoxin component of a type II toxin-antitoxin (TA) system. Its cognate toxin is VapC16 (Potential). The protein is Putative antitoxin VapB16 (vapB16) of Archaeoglobus fulgidus (strain ATCC 49558 / DSM 4304 / JCM 9628 / NBRC 100126 / VC-16).